Consider the following 138-residue polypeptide: Large ribosomal subunit protein eL27 (138 aa).

Belongs to the eukaryotic ribosomal protein eL27 family.

In Solanum tuberosum (Potato), this protein is Large ribosomal subunit protein eL27 (RPL27).